The following is a 132-amino-acid chain: Small ribosomal subunit protein uS8 (132 aa).

This sequence belongs to the universal ribosomal protein uS8 family. As to quaternary structure, part of the 30S ribosomal subunit. Contacts proteins S5 and S12.

One of the primary rRNA binding proteins, it binds directly to 16S rRNA central domain where it helps coordinate assembly of the platform of the 30S subunit. The protein is Small ribosomal subunit protein uS8 of Desulfitobacterium hafniense (strain DSM 10664 / DCB-2).